The chain runs to 569 residues: 4-hydroxy-7-methoxy-3-oxo-3,4-dihydro-2H-1,4-benzoxazin-2-yl glucoside beta-D-glucosidase 1b, chloroplastic (569 aa).

The transit peptide at 1–50 (MALLAAATLNPTTHLSLRSRAGRNSENLWLRSTASSQKSKGRFCNLTIRA) directs the protein to the chloroplast. A beta-D-glucoside-binding positions include Q92, H194, and 239–240 (NE). E240 functions as the Proton donor in the catalytic mechanism. The cysteines at positions 259 and 265 are disulfide-linked. A beta-D-glucoside-binding positions include Y383, E456, W504, 511-512 (EW), and F520. Residue E456 is the Nucleophile of the active site.

It belongs to the glycosyl hydrolase 1 family. As to quaternary structure, homo- and heterohexamers. In terms of tissue distribution, expressed in young seedlings early after germination.

It localises to the plastid. It is found in the chloroplast. The catalysed reaction is Hydrolysis of terminal, non-reducing beta-D-glucosyl residues with release of beta-D-glucose.. It carries out the reaction DIMBOA beta-D-glucoside + H2O = DIMBOA + D-glucose. The enzyme catalyses DIBOA beta-D-glucoside + H2O = DIBOA + D-glucose. Acts in defense of young plant parts against pests via the production of hydroxamic acids from hydroxamic acid glucosides. Enzymatic activity is highly correlated with plant growth. The preferred substrate is DIMBOA-beta-D-glucoside. In Triticum aestivum (Wheat), this protein is 4-hydroxy-7-methoxy-3-oxo-3,4-dihydro-2H-1,4-benzoxazin-2-yl glucoside beta-D-glucosidase 1b, chloroplastic (GLU1B).